Here is a 275-residue protein sequence, read N- to C-terminus: Urease accessory protein UreD (275 aa).

It belongs to the UreD family. As to quaternary structure, ureD, UreF and UreG form a complex that acts as a GTP-hydrolysis-dependent molecular chaperone, activating the urease apoprotein by helping to assemble the nickel containing metallocenter of UreC. The UreE protein probably delivers the nickel.

The protein localises to the cytoplasm. Functionally, required for maturation of urease via the functional incorporation of the urease nickel metallocenter. The sequence is that of Urease accessory protein UreD from Cereibacter sphaeroides (strain ATCC 17023 / DSM 158 / JCM 6121 / CCUG 31486 / LMG 2827 / NBRC 12203 / NCIMB 8253 / ATH 2.4.1.) (Rhodobacter sphaeroides).